Reading from the N-terminus, the 348-residue chain is Alpha-2-HS-glycoprotein (348 aa).

Residues 1–18 (MKTLVLLLCFTLLWGCQS) form the signal peptide. The region spanning 19-133 (APQGTGLGFR…QFSVMHTKCH (115 aa)) is the Cystatin fetuin-A-type 1 domain. 6 cysteine pairs are disulfide-bonded: cysteine 32/cysteine 339, cysteine 89/cysteine 100, cysteine 114/cysteine 132, cysteine 146/cysteine 149, cysteine 208/cysteine 219, and cysteine 230/cysteine 247. The N-linked (GlcNAc...) asparagine glycan is linked to asparagine 99. Phosphoserine is present on residues serine 134 and serine 138. Residues 144-255 (KVCPHCALLT…TCTAFPTQAN (112 aa)) form the Cystatin fetuin-A-type 2 domain. N-linked (GlcNAc...) asparagine glycosylation is found at asparagine 156 and asparagine 176. 4 positions are modified to phosphoserine: serine 307, serine 311, serine 314, and serine 316.

This sequence belongs to the fetuin family. In terms of processing, phosphorylated by FAM20C in the extracellular medium. Expressed by the liver and secreted in plasma.

It is found in the secreted. This is Alpha-2-HS-glycoprotein (AHSG) from Meriones unguiculatus (Mongolian jird).